The sequence spans 39 residues: MELFAALNLEPIFQLTFVALIMLAGPFVIFLLAFRGGDL.

A helical transmembrane segment spans residues 12 to 32 (IFQLTFVALIMLAGPFVIFLL).

The protein belongs to the Psb30/Ycf12 family. PSII is composed of 1 copy each of membrane proteins PsbA, PsbB, PsbC, PsbD, PsbE, PsbF, PsbH, PsbI, PsbJ, PsbK, PsbL, PsbM, PsbT, PsbX, PsbY, PsbZ, Psb30/Ycf12, peripheral proteins PsbO, CyanoQ (PsbQ), PsbU, PsbV and a large number of cofactors. It forms dimeric complexes.

Its subcellular location is the cellular thylakoid membrane. In terms of biological role, a core subunit of photosystem II (PSII), probably helps stabilize the reaction center. The sequence is that of Photosystem II reaction center protein Psb30 from Microcystis aeruginosa (strain NIES-843 / IAM M-2473).